A 54-amino-acid chain; its full sequence is Ovomucoid (54 aa).

Residues 4-54 (VDCSGYPTHACTLELKPLCGSDNQTYSNKCGFCNAVAQSNGTLTLSHFGKC) form the Kazal-like domain. 3 disulfides stabilise this stretch: C6–C36, C14–C33, and C22–C54. N-linked (GlcNAc...) asparagine glycosylation occurs at N43.

It localises to the secreted. The polypeptide is Ovomucoid (Leipoa ocellata (Malleefowl)).